We begin with the raw amino-acid sequence, 553 residues long: Probable malate:quinone oxidoreductase (553 aa).

Over residues 534–543 (QLKPQVQPQP) the composition is skewed to low complexity. The interval 534–553 (QLKPQVQPQPAHKAVADIAL) is disordered.

It belongs to the MQO family. Requires FAD as cofactor.

It catalyses the reaction (S)-malate + a quinone = a quinol + oxaloacetate. It functions in the pathway carbohydrate metabolism; tricarboxylic acid cycle; oxaloacetate from (S)-malate (quinone route): step 1/1. This is Probable malate:quinone oxidoreductase from Citrobacter koseri (strain ATCC BAA-895 / CDC 4225-83 / SGSC4696).